The following is a 117-amino-acid chain: MASSAFVKFTCALVMCMMVAAPLAEAITCGLVASKLAPCIGYLQGAPGPSAACCGGIKSLNSAAASPADRKTACTCLKSAATSIKGINYGKAASLPRQCGVSVPYAISPNTNCNAIH.

The N-terminal stretch at 1–26 (MASSAFVKFTCALVMCMMVAAPLAEA) is a signal peptide. 4 disulfide bridges follow: cysteine 29/cysteine 76, cysteine 39/cysteine 53, cysteine 54/cysteine 99, and cysteine 74/cysteine 113.

It belongs to the plant LTP family.

Plant non-specific lipid-transfer proteins transfer phospholipids as well as galactolipids across membranes. May play a role in wax or cutin deposition in the cell walls of expanding epidermal cells and certain secretory tissues. Also has fungicide activity. The protein is Non-specific lipid-transfer protein (IWF1') of Beta vulgaris (Sugar beet).